Consider the following 572-residue polypeptide: MSYRVTGDAARKARERYELKQAAAEFYRKRNVPERLEEALNSTFCLGPEDVYGHLANYFAQFSMPPTICQIRGRKVLDGSGEPTVEVEVSCTVKNSDKRICSSVISAVSEHPKASEGLEQERNHSADTAIQWLKDLSPLLKGMSPNEQHNIDQLLSDFYQPKIEEEKARRQMEREASPMAIEPVPSPVTSPALGKKKGSGKGKKAVVMEKPIPPKEAPEPVVPGSPAIGALSLAVAKASSVLGKTPLYLHIATLRNEKLPSEFIMPTPMISVLSCGKSSPGKLNLMKEVLVIPPTGLTVQQSLDMALMLQNQIVKQINSISKTGPAIKNVTPLGCMLIGGDRIEQPLDLICEACQHVGLELGRNLYLAINCAAHELMDYNKAKYEALSGTFKSPDEMVDLYVDLINRQPAILALLDPLRKEDAAQWESLTKALGSKCFLFADAASKPVCKLLESADIHNPPCSGTVIKHTNETTVSQLLGSFKLIEGENRVTILGCPCEESVDDSIADLAVGLGARFVKLGGLLRGERSSKYNRLLAIEDELTQAGTLGFWTKHEFPILSDVENLPGPEEVE.

The tract at residues 181–204 (IEPVPSPVTSPALGKKKGSGKGKK) is disordered. Positions 194–204 (GKKKGSGKGKK) are enriched in basic residues. Residue Glu-288 coordinates substrate. The active-site Proton acceptor is the Lys-468. Position 519 (Lys-519) interacts with substrate.

The protein belongs to the enolase family.

The enzyme catalyses (2R)-2-phosphoglycerate = phosphoenolpyruvate + H2O. The protein operates within carbohydrate degradation; glycolysis; pyruvate from D-glyceraldehyde 3-phosphate: step 4/5. In Xenopus laevis (African clawed frog), this protein is Enolase 4 (eno4).